We begin with the raw amino-acid sequence, 638 residues long: Carbon monoxide dehydrogenase (638 aa).

[4Fe-4S] cluster contacts are provided by Cys-46, Cys-55, Cys-58, Cys-63, and Cys-74. Residues His-265, Cys-299, Cys-343, Cys-452, Cys-483, and Cys-524 each coordinate [Ni-4Fe-5S] cluster.

The protein belongs to the Ni-containing carbon monoxide dehydrogenase family. Homodimer. [4Fe-4S] cluster is required as a cofactor. Requires [Ni-4Fe-5S] cluster as cofactor.

The catalysed reaction is CO + 2 oxidized [2Fe-2S]-[ferredoxin] + H2O = 2 reduced [2Fe-2S]-[ferredoxin] + CO2 + 2 H(+). CODH oxidizes carbon monoxide coupled, via CooF, to the reduction of a hydrogen cation by a hydrogenase (possibly CooH). In Methanopyrus kandleri (strain AV19 / DSM 6324 / JCM 9639 / NBRC 100938), this protein is Carbon monoxide dehydrogenase (cooS).